Consider the following 1249-residue polypeptide: Hyphally regulated cell wall protein 3 (1249 aa).

Positions 1-20 are cleaved as a signal peptide; it reads MHLFKRIALTLWLIISSTLA. N-linked (GlcNAc...) asparagine glycosylation occurs at Asn373. Positions 383–415 are enriched in low complexity; sequence FPTTSQSSSSETVASSSQPDSSSTEPSAFPSST. Disordered stretches follow at residues 383–729 and 883–1217; these read FPTT…SGII and GLST…SSAS. The segment covering 416-428 has biased composition (polar residues); that stretch reads GDSSAEPSITSDY. The segment covering 429-716 has biased composition (low complexity); it reads SSSELSVVPS…SEYTATWTTT (288 aa). The N-linked (GlcNAc...) asparagine glycan is linked to Asn681. 2 stretches are compositionally biased toward polar residues: residues 717 to 729 and 883 to 935; these read NSDG…SGII and GLST…PVPT. N-linked (GlcNAc...) asparagine glycans are attached at residues Asn891, Asn940, Asn944, Asn948, Asn952, Asn956, Asn960, Asn966, Asn970, Asn974, Asn984, Asn988, Asn992, Asn996, Asn1000, Asn1010, Asn1014, Asn1018, Asn1022, Asn1026, Asn1032, Asn1046, Asn1050, Asn1058, Asn1062, Asn1072, Asn1076, Asn1080, Asn1086, Asn1090, Asn1094, Asn1098, Asn1114, Asn1118, Asn1122, Asn1128, Asn1132, Asn1136, Asn1140, Asn1150, Asn1154, Asn1158, Asn1172, Asn1180, and Asn1186. Low complexity predominate over residues 941 to 959; the sequence is GSNNGSDNGSNNGSNNGSN. Over residues 960–982 the composition is skewed to gly residues; sequence NGSGSGNGSNNGSNNGSGSGNGF. Over residues 983 to 1043 the composition is skewed to low complexity; the sequence is NNGSDNGSNN…SNSGSDSGNG (61 aa). Gly residues predominate over residues 1062–1078; it reads NGSGSGGESNNGSGNGS. The segment covering 1079-1097 has biased composition (low complexity); that stretch reads DNGSSPDNGSNNGSNNGSN. Positions 1139-1167 are enriched in low complexity; it reads NNGSNSGSNSDNGSNNSSGNGSSSDLGSV. 2 stretches are compositionally biased toward low complexity: residues 1175–1194 and 1205–1217; these read NEGS…GAGA and SPSA…SSAS. An N-linked (GlcNAc...) asparagine glycan is attached at Asn1225. Asn1225 is lipidated: GPI-anchor amidated asparagine. Positions 1226-1249 are cleaved as a propeptide — removed in mature form; sequence GSGKLLNGKVLTLSVLSSMVVVFL.

Belongs to the HYR1/IFF family. Post-translationally, the GPI-anchor is attached to the protein in the endoplasmic reticulum and serves to target the protein to the cell surface. There, the glucosamine-inositol phospholipid moiety is cleaved off and the GPI-modified mannoprotein is covalently attached via its lipidless GPI glycan remnant to the 1,6-beta-glucan of the outer cell wall layer.

The protein localises to the secreted. It is found in the cell wall. The protein resides in the membrane. In terms of biological role, GPI-anchored cell wall protein involved in cell wall organization, hyphal growth, as well as in host-fungal interaction and virulence. The chain is Hyphally regulated cell wall protein 3 (HYR3) from Candida albicans (strain SC5314 / ATCC MYA-2876) (Yeast).